The following is a 1187-amino-acid chain: Tyrosine-protein phosphatase non-receptor type 14 (1187 aa).

The region spanning 21–306 (FVTRIRLLDS…TRHKFYKQNK (286 aa)) is the FERM domain. S314, S461, and S486 each carry phosphoserine. The segment covering 510–524 (LVSPSDQRNPKNNVV) has biased composition (polar residues). The interval 510–531 (LVSPSDQRNPKNNVVPSKPGAS) is disordered. A phosphoserine mark is found at S591, S593, S594, and S642. Disordered stretches follow at residues 671-690 (LREQGPPEEGSGSHEVPQLP) and 787-824 (KAISMSRTDPPAVNGASLGPSISEPDLTSVKERVKKEP). Residues 815-824 (SVKERVKKEP) show a composition bias toward basic and acidic residues. Phosphoserine is present on S831. The Tyrosine-protein phosphatase domain maps to 909 to 1180 (VFTEYEQIPK…KFVYQVLIQF (272 aa)). Residues D1079, 1121–1127 (CSAGVGR), and Q1165 each bind substrate. The active-site Phosphocysteine intermediate is C1121.

It belongs to the protein-tyrosine phosphatase family. Non-receptor class subfamily. In terms of assembly, interacts with FLT4; the interaction is enhanced by stimulation with VEGFC. Interacts (via PPxY motifs) with YAP1 (via WW domains); this interaction leads to the cytoplasmic sequestration of YAP1 and inhibits its transcriptional co-activator activity. Post-translationally, ubiquitinated by the ECS (Elongin BC-CUL2/5-SOCS-box protein)/LRR1 E3 ligase complex and subsequently targeted to proteasomal degradation. In terms of tissue distribution, ubiquitous.

The protein localises to the cytoplasm. It is found in the cytoskeleton. Its subcellular location is the nucleus. It carries out the reaction O-phospho-L-tyrosyl-[protein] + H2O = L-tyrosyl-[protein] + phosphate. Its function is as follows. Protein tyrosine phosphatase which may play a role in the regulation of lymphangiogenesis, cell-cell adhesion, cell-matrix adhesion, cell migration, cell growth and also regulates TGF-beta gene expression, thereby modulating epithelial-mesenchymal transition. Mediates beta-catenin dephosphorylation at adhesion junctions. Acts as a negative regulator of the oncogenic property of YAP, a downstream target of the hippo pathway, in a cell density-dependent manner. May function as a tumor suppressor. This chain is Tyrosine-protein phosphatase non-receptor type 14 (PTPN14), found in Homo sapiens (Human).